We begin with the raw amino-acid sequence, 131 residues long: Hydrogenase maturation factor HypA (131 aa).

Residue histidine 2 participates in Ni(2+) binding. Cysteine 74, cysteine 77, cysteine 91, and cysteine 94 together coordinate Zn(2+).

This sequence belongs to the HypA/HybF family.

Involved in the maturation of [NiFe] hydrogenases. Required for nickel insertion into the metal center of the hydrogenase. This chain is Hydrogenase maturation factor HypA, found in Streptomyces avermitilis (strain ATCC 31267 / DSM 46492 / JCM 5070 / NBRC 14893 / NCIMB 12804 / NRRL 8165 / MA-4680).